A 147-amino-acid polypeptide reads, in one-letter code: MSNFTAEDKAAITSLWGKVNVEDAGGETLGRLLVVYPWTQRFFDSFGSLSSPSAIMGNPKVKAHGVKVLTSLGEAIKNLDDLKGTFGSLSELHCDKLHVDPENFRLLGNVLVTVLAILHGKEFTPEVQASWQKMVAGVASALASRYH.

The Globin domain maps to Asn3 to His147. Heme b contacts are provided by His64 and His93.

This sequence belongs to the globin family. Heterotetramer of two alpha chains and two gamma chains in fetal hemoglobin (Hb F). As to expression, red blood cells.

Gamma chains make up the fetal hemoglobin F, in combination with alpha chains. The chain is Hemoglobin subunit gamma (HBG) from Alouatta belzebul (Red-handed howler monkey).